Here is a 1031-residue protein sequence, read N- to C-terminus: Error-prone DNA polymerase (1031 aa).

This sequence belongs to the DNA polymerase type-C family. DnaE2 subfamily.

It is found in the cytoplasm. The enzyme catalyses DNA(n) + a 2'-deoxyribonucleoside 5'-triphosphate = DNA(n+1) + diphosphate. Functionally, DNA polymerase involved in damage-induced mutagenesis and translesion synthesis (TLS). It is not the major replicative DNA polymerase. In Pseudomonas syringae pv. tomato (strain ATCC BAA-871 / DC3000), this protein is Error-prone DNA polymerase.